A 490-amino-acid chain; its full sequence is Betaine aldehyde dehydrogenase (490 aa).

Residues isoleucine 27 and aspartate 93 each coordinate K(+). NAD(+) is bound at residue 150 to 152 (GAW). The active-site Charge relay system is the lysine 162. Position 176–179 (176–179 (KPSE)) interacts with NAD(+). Valine 180 provides a ligand contact to K(+). 230–233 (GTTT) is an NAD(+) binding site. K(+) is bound at residue leucine 246. Catalysis depends on glutamate 252, which acts as the Proton acceptor. Residues glycine 254, cysteine 286, and glutamate 387 each coordinate NAD(+). Cysteine 286 serves as the catalytic Nucleophile. Cysteine sulfenic acid (-SOH) is present on cysteine 286. K(+) contacts are provided by lysine 457 and glycine 460. Catalysis depends on glutamate 464, which acts as the Charge relay system.

The protein belongs to the aldehyde dehydrogenase family. In terms of assembly, dimer of dimers. It depends on K(+) as a cofactor.

The catalysed reaction is betaine aldehyde + NAD(+) + H2O = glycine betaine + NADH + 2 H(+). It participates in amine and polyamine biosynthesis; betaine biosynthesis via choline pathway; betaine from betaine aldehyde: step 1/1. In terms of biological role, involved in the biosynthesis of the osmoprotectant glycine betaine. Catalyzes the irreversible oxidation of betaine aldehyde to the corresponding acid. This is Betaine aldehyde dehydrogenase from Pseudomonas putida (strain ATCC 700007 / DSM 6899 / JCM 31910 / BCRC 17059 / LMG 24140 / F1).